Reading from the N-terminus, the 413-residue chain is Elongation factor 1-alpha (413 aa).

A tr-type G domain is found at 5–211; the sequence is KEHMNLAFIG…DDLEAPEKPV (207 aa). The G1 stretch occupies residues 14-21; the sequence is GHVDHGKS. 14 to 21 is a GTP binding site; it reads GHVDHGKS. Ser21 provides a ligand contact to Mg(2+). The tract at residues 60 to 64 is G2; the sequence is GVTID. The interval 81–84 is G3; the sequence is DCPG. GTP contacts are provided by residues 81–85 and 136–139; these read DCPGH and NKMD. Positions 136-139 are G4; the sequence is NKMD. The interval 175–177 is G5; that stretch reads SAF.

This sequence belongs to the TRAFAC class translation factor GTPase superfamily. Classic translation factor GTPase family. EF-Tu/EF-1A subfamily.

The protein localises to the cytoplasm. It catalyses the reaction GTP + H2O = GDP + phosphate + H(+). Its function is as follows. GTP hydrolase that promotes the GTP-dependent binding of aminoacyl-tRNA to the A-site of ribosomes during protein biosynthesis. This is Elongation factor 1-alpha from Methanothermobacter thermautotrophicus (strain ATCC 29096 / DSM 1053 / JCM 10044 / NBRC 100330 / Delta H) (Methanobacterium thermoautotrophicum).